The sequence spans 352 residues: Uroporphyrinogen decarboxylase (352 aa).

Residues 26–30 (RQAGR), D76, Y153, S208, and H323 each bind substrate.

The protein belongs to the uroporphyrinogen decarboxylase family. In terms of assembly, homodimer.

It localises to the cytoplasm. It carries out the reaction uroporphyrinogen III + 4 H(+) = coproporphyrinogen III + 4 CO2. It participates in porphyrin-containing compound metabolism; protoporphyrin-IX biosynthesis; coproporphyrinogen-III from 5-aminolevulinate: step 4/4. Catalyzes the decarboxylation of four acetate groups of uroporphyrinogen-III to yield coproporphyrinogen-III. This is Uroporphyrinogen decarboxylase from Synechococcus sp. (strain CC9902).